We begin with the raw amino-acid sequence, 537 residues long: Pentatricopeptide repeat-containing protein At1g02370, mitochondrial (537 aa).

A mitochondrion-targeting transit peptide spans 1 to 18; it reads MNFRNLIASGSRLGKRFC. PPR repeat units lie at residues 171-205, 206-240, 241-275, 277-307, 312-346, 347-377, and 382-416; these read HQST…NFVN, NSLP…GISP, CGVT…SEAK, TWNT…MEEK, NRDS…RPEV, NNLS…WESK, and DMRL…SKGP.

Belongs to the PPR family. P subfamily.

It localises to the mitochondrion. The sequence is that of Pentatricopeptide repeat-containing protein At1g02370, mitochondrial from Arabidopsis thaliana (Mouse-ear cress).